The following is a 258-amino-acid chain: MASPAMHPVPPVADVPRHIAIIMDGNGRWAQRRRRPRVIGHRAGARAVNRTIDFCLEKGVSALTLFAFSSENWGRPQDEVDALMKLFLHALDREVGELQRRGVQVRFIGDRSRFAAPLRDRMAGAERSTAANARLVLSIAASYGGRQDIATAARALAEDVAAGRLQPEQIDEALLSSRVALADLPAPDLFIRTGGDTRISNFLLWQLAYTELWFTETLWPEFDAGVMQQALDDYAGRERRFGLTSAQIADKATETSSA.

Residue Asp24 is part of the active site. Asp24 provides a ligand contact to Mg(2+). Substrate is bound by residues 25 to 28, Trp29, Arg37, His41, and 69 to 71; these read GNGR and SSE. Asn72 (proton acceptor) is an active-site residue. Substrate-binding positions include Trp73, Arg75, Arg192, and 198–200; that span reads RIS. Glu211 is a binding site for Mg(2+).

Belongs to the UPP synthase family. As to quaternary structure, homodimer. Mg(2+) is required as a cofactor.

It catalyses the reaction 8 isopentenyl diphosphate + (2E,6E)-farnesyl diphosphate = di-trans,octa-cis-undecaprenyl diphosphate + 8 diphosphate. Catalyzes the sequential condensation of isopentenyl diphosphate (IPP) with (2E,6E)-farnesyl diphosphate (E,E-FPP) to yield (2Z,6Z,10Z,14Z,18Z,22Z,26Z,30Z,34E,38E)-undecaprenyl diphosphate (di-trans,octa-cis-UPP). UPP is the precursor of glycosyl carrier lipid in the biosynthesis of bacterial cell wall polysaccharide components such as peptidoglycan and lipopolysaccharide. In Xanthomonas oryzae pv. oryzae (strain KACC10331 / KXO85), this protein is Ditrans,polycis-undecaprenyl-diphosphate synthase ((2E,6E)-farnesyl-diphosphate specific).